The chain runs to 175 residues: ATP synthase subunit delta (175 aa).

This sequence belongs to the ATPase delta chain family. As to quaternary structure, F-type ATPases have 2 components, F(1) - the catalytic core - and F(0) - the membrane proton channel. F(1) has five subunits: alpha(3), beta(3), gamma(1), delta(1), epsilon(1). F(0) has three main subunits: a(1), b(2) and c(10-14). The alpha and beta chains form an alternating ring which encloses part of the gamma chain. F(1) is attached to F(0) by a central stalk formed by the gamma and epsilon chains, while a peripheral stalk is formed by the delta and b chains.

It localises to the cell inner membrane. F(1)F(0) ATP synthase produces ATP from ADP in the presence of a proton or sodium gradient. F-type ATPases consist of two structural domains, F(1) containing the extramembraneous catalytic core and F(0) containing the membrane proton channel, linked together by a central stalk and a peripheral stalk. During catalysis, ATP synthesis in the catalytic domain of F(1) is coupled via a rotary mechanism of the central stalk subunits to proton translocation. Its function is as follows. This protein is part of the stalk that links CF(0) to CF(1). It either transmits conformational changes from CF(0) to CF(1) or is implicated in proton conduction. The chain is ATP synthase subunit delta from Xanthomonas euvesicatoria pv. vesicatoria (strain 85-10) (Xanthomonas campestris pv. vesicatoria).